A 338-amino-acid chain; its full sequence is tRNA N6-adenosine threonylcarbamoyltransferase (338 aa).

2 residues coordinate Fe cation: His-112 and His-116. Residues 135–139, Asp-168, Gly-181, and Asn-273 each bind substrate; that span reads LVSGG. Asp-301 contacts Fe cation.

This sequence belongs to the KAE1 / TsaD family. Requires Fe(2+) as cofactor.

Its subcellular location is the cytoplasm. The enzyme catalyses L-threonylcarbamoyladenylate + adenosine(37) in tRNA = N(6)-L-threonylcarbamoyladenosine(37) in tRNA + AMP + H(+). Functionally, required for the formation of a threonylcarbamoyl group on adenosine at position 37 (t(6)A37) in tRNAs that read codons beginning with adenine. Is involved in the transfer of the threonylcarbamoyl moiety of threonylcarbamoyl-AMP (TC-AMP) to the N6 group of A37, together with TsaE and TsaB. TsaD likely plays a direct catalytic role in this reaction. This is tRNA N6-adenosine threonylcarbamoyltransferase from Buchnera aphidicola subsp. Baizongia pistaciae (strain Bp).